We begin with the raw amino-acid sequence, 239 residues long: MTEPDLSPAFVLHTRPYRETSQLVDLFVASMGKVSVVAKGSRSPRSSVKGLLQPFLPLHIHYGGKSSLKTLLQLEARSPQVALQGERLFSALYLNELLYYLLEPDTEYPGLFSGYFQTLLALADQQQLVSPLLRQFELLLLQQLGYGADFCYAADSCLPIDPACYYRYEPEAGFITTALRDHAFFSGREIIGIAEQAFSDEYILAAARRFSRQAFAALLGNRPLKSRELYSAFIARRSE.

The protein belongs to the RecO family.

In terms of biological role, involved in DNA repair and RecF pathway recombination. In Tolumonas auensis (strain DSM 9187 / NBRC 110442 / TA 4), this protein is DNA repair protein RecO.